We begin with the raw amino-acid sequence, 270 residues long: MVGMGDRLFNMVFTRRPPQSMSRCISDPGYRAAARFSYEEASAQYKVYVERLHSAGITVKELGPLEDYPDSVFIQDTAVIGGGSRVAVLARFGAPSRRGEEGHVVSILSSMGLEIHPVKPPGTLEGGDVLVTGEGVVFAGLSSRTNREGVETLKTAFPNVNVETLNAKGLHLLSHLGYLGKATLISAEGLYDKSIFKRHGFDLIEIPWEERDAANLLYLGEGRVLLPAGYNQTRDLLEQHGFRIVEAEIRQFMACMGGVTCLSLPIYNIL.

Histidine 171 serves as the catalytic Proton donor. The active-site Nucleophile is the cysteine 261.

This sequence belongs to the DDAH family.

This is an uncharacterized protein from Aeropyrum pernix (strain ATCC 700893 / DSM 11879 / JCM 9820 / NBRC 100138 / K1).